We begin with the raw amino-acid sequence, 104 residues long: MERVASIMYLYPGNQEEYKKRHDALWPEMKEALKAHGAANYSIFLDEKTDTLFAYVEVEDKAIYDKIAETEICQKWWKYMAPIMKSNPNNSPVALDLKEVFYLA.

Tyrosine 18 contacts substrate. Histidine 22 serves as the catalytic Proton donor. Substrate-binding positions include tyrosine 41 and 76-77 (WW).

It belongs to the rhamnose mutarotase family. Homodimer.

The protein localises to the cytoplasm. The catalysed reaction is alpha-L-rhamnose = beta-L-rhamnose. Its pathway is carbohydrate metabolism; L-rhamnose metabolism. Functionally, involved in the anomeric conversion of L-rhamnose. In Listeria monocytogenes serotype 4b (strain F2365), this protein is L-rhamnose mutarotase.